The following is a 526-amino-acid chain: Peptide chain release factor 3 (526 aa).

The 269-residue stretch at 9–277 (DKRRTFAIIS…GIVEWAPKPL (269 aa)) folds into the tr-type G domain. Residues 18–25 (SHPDAGKT), 86–90 (DTPGH), and 140–143 (NKLD) contribute to the GTP site.

Belongs to the TRAFAC class translation factor GTPase superfamily. Classic translation factor GTPase family. PrfC subfamily.

It is found in the cytoplasm. Functionally, increases the formation of ribosomal termination complexes and stimulates activities of RF-1 and RF-2. It binds guanine nucleotides and has strong preference for UGA stop codons. It may interact directly with the ribosome. The stimulation of RF-1 and RF-2 is significantly reduced by GTP and GDP, but not by GMP. The sequence is that of Peptide chain release factor 3 from Shewanella sp. (strain ANA-3).